The chain runs to 78 residues: U7-lycotoxin-Ls1h (78 aa).

The N-terminal stretch at 1 to 22 (MKLIIFTGLTLLLIVSLIDVEA) is a signal peptide. A propeptide spanning residues 23-26 (QNEG) is cleaved from the precursor.

The protein belongs to the neurotoxin 19 (CSTX) family. 07 (U7-Lctx) subfamily. Contains 4 disulfide bonds. In terms of tissue distribution, expressed by the venom gland.

It is found in the secreted. In Lycosa singoriensis (Wolf spider), this protein is U7-lycotoxin-Ls1h.